The chain runs to 271 residues: Thiosulfate sulfurtransferase (271 aa).

Rhodanese domains are found at residues 21 to 129 (GAPE…ALDR) and 159 to 270 (GAAD…TPVE). Residue C230 is the Cysteine persulfide intermediate of the active site.

It localises to the cytoplasm. It carries out the reaction thiosulfate + hydrogen cyanide = thiocyanate + sulfite + 2 H(+). Its function is as follows. Catalyzes the sulfur transfer reaction from thiosulfate to cyanide, thus converting cyanide to the less toxic thiocyanate. Contributes to P.aeruginosa survival under cyanogenic conditions, and thus provides the bacterium with a defense mechanism against endogenous cyanide toxicity. Is the main cytoplasmic rhodanese in P.aeruginosa, accounting for 90% of total rhodanese activity. This is Thiosulfate sulfurtransferase from Pseudomonas aeruginosa (strain ATCC 15692 / DSM 22644 / CIP 104116 / JCM 14847 / LMG 12228 / 1C / PRS 101 / PAO1).